Here is a 136-residue protein sequence, read N- to C-terminus: Small ribosomal subunit protein uS8 (136 aa).

This sequence belongs to the universal ribosomal protein uS8 family. As to quaternary structure, part of the 30S ribosomal subunit. Contacts proteins S5 and S12.

In terms of biological role, one of the primary rRNA binding proteins, it binds directly to 16S rRNA central domain where it helps coordinate assembly of the platform of the 30S subunit. The chain is Small ribosomal subunit protein uS8 from Persephonella marina (strain DSM 14350 / EX-H1).